Consider the following 273-residue polypeptide: SPbeta prophage-derived uncharacterized protein YomF (273 aa).

Residues 119 to 149 are a coiled coil; it reads VIETLQGLIDEAEDTIIRMNERIAECERVTK.

This chain is SPbeta prophage-derived uncharacterized protein YomF (yomF), found in Bacillus subtilis (strain 168).